A 103-amino-acid polypeptide reads, in one-letter code: Large ribosomal subunit protein bL21 (103 aa).

This sequence belongs to the bacterial ribosomal protein bL21 family. In terms of assembly, part of the 50S ribosomal subunit. Contacts protein L20.

Functionally, this protein binds to 23S rRNA in the presence of protein L20. The chain is Large ribosomal subunit protein bL21 from Glaesserella parasuis serovar 5 (strain SH0165) (Haemophilus parasuis).